A 182-amino-acid chain; its full sequence is Small ribosomal subunit protein uS4c (182 aa).

The segment at 8-36 (LGALPGLTSKRPGSGSDPKNKSRSGKRSQ) is disordered. Positions 82–143 (MRLDNILFRL…KQRSKALIQN (62 aa)) constitute an S4 RNA-binding domain.

Belongs to the universal ribosomal protein uS4 family. Part of the 30S ribosomal subunit. Contacts protein S5. The interaction surface between S4 and S5 is involved in control of translational fidelity.

It is found in the plastid. It localises to the chloroplast. Its function is as follows. One of the primary rRNA binding proteins, it binds directly to 16S rRNA where it nucleates assembly of the body of the 30S subunit. In terms of biological role, with S5 and S12 plays an important role in translational accuracy. The chain is Small ribosomal subunit protein uS4c (rps4) from Dietes robinsoniana (Lord Howe wedding lily).